A 228-amino-acid chain; its full sequence is Growth arrest-specific protein 1 homolog (228 aa).

The first 17 residues, 1-17 (MRRVILPLVMTVTLCLA), serve as a signal peptide directing secretion. Asparagine 143 and asparagine 156 each carry an N-linked (GlcNAc...) asparagine glycan. The GPI-anchor amidated aspartate moiety is linked to residue aspartate 205. Positions 206 to 228 (SSVGHGFNILSAISVYLLTVLVF) are cleaved as a propeptide — removed in mature form.

In terms of tissue distribution, pharynx muscle cells from its early formation, in the two-fold embryo, until the adult stage.

Its subcellular location is the cell membrane. Role in pharynx function or development. This is Growth arrest-specific protein 1 homolog (phg-1) from Caenorhabditis elegans.